The primary structure comprises 271 residues: MFSIQQPLLVFSDLDGTLLDSHSYDWQPAAPWLSRLREANVPVILCSSKTSAEMLYLQKTLGLQGLPLIAENGAVIQLAEQWQDIDGFPRIISGISHGEISQVLNTLREKEHFKFTTFDDVDDATIAEWTGLSRSQAALTQLHEASVTLIWRDSDERMAQFTARLNELGLQFMQGARFWHVLDASAGKDQAANWIIATYQQLSGKRPTTLGLGDGPNDAPLLEVMDYAVIVKGLNREGVHLHDEDPTRVWRTQREGPEGWREGLDHFFSAR.

D13 acts as the Nucleophile in catalysis. Mg(2+) contacts are provided by D13, D15, and D214.

This sequence belongs to the HAD-like hydrolase superfamily. MPGP family. Requires Mg(2+) as cofactor.

The protein localises to the cytoplasm. The enzyme catalyses 2-O-(alpha-D-mannosyl)-3-phosphoglycerate + H2O = (2R)-2-O-(alpha-D-mannosyl)-glycerate + phosphate. The chain is Mannosyl-3-phosphoglycerate phosphatase from Escherichia coli O139:H28 (strain E24377A / ETEC).